The primary structure comprises 87 residues: DNA polymerase epsilon subunit C (87 aa).

In terms of assembly, DNA polymerase epsilon is a heterotetramer consisting of cdc20/Pol2, dpb2, dpb3, and dpb4. Also forms a heterodimer consisting dpb3 and dpb4. Interacts directly with cdc20/pol2 and dpb4.

The protein localises to the nucleus. In terms of biological role, as accessory component of the DNA polymerase epsilon (DNA polymerase II) participates in chromosomal DNA replication. It is required during synthesis of the leading and lagging DNA strands at the replication fork and binds at/or near replication origins and moves along DNA with the replication fork. It has 3'-5' proofreading exonuclease activity that correct errors arising during DNA replication. It is also involved in DNA synthesis during DNA repair. The dpb3-dpb4 dimer associates with histone deacetylases, chromatin remodelers, and histones and plays a crucial role in the inheritance of histone hypoacetylation and H3K9 methylation in heterochromatin. The dpb3-dpb4 dimer is also required for the recruitment of sir2 to heterochromatin. The polypeptide is DNA polymerase epsilon subunit C (Schizosaccharomyces pombe (strain 972 / ATCC 24843) (Fission yeast)).